We begin with the raw amino-acid sequence, 342 residues long: L-threonine 3-dehydrogenase (342 aa).

Cysteine 38 provides a ligand contact to Zn(2+). Catalysis depends on charge relay system residues threonine 40 and histidine 43. Zn(2+) is bound by residues histidine 63, glutamate 64, cysteine 93, cysteine 96, cysteine 99, and cysteine 107. Residues isoleucine 175, aspartate 195, arginine 200, 262–264 (LGI), and 286–287 (IY) contribute to the NAD(+) site.

Belongs to the zinc-containing alcohol dehydrogenase family. As to quaternary structure, homotetramer. Zn(2+) serves as cofactor.

It is found in the cytoplasm. The enzyme catalyses L-threonine + NAD(+) = (2S)-2-amino-3-oxobutanoate + NADH + H(+). The protein operates within amino-acid degradation; L-threonine degradation via oxydo-reductase pathway; glycine from L-threonine: step 1/2. Functionally, catalyzes the NAD(+)-dependent oxidation of L-threonine to 2-amino-3-ketobutyrate. The chain is L-threonine 3-dehydrogenase from Burkholderia cenocepacia (strain ATCC BAA-245 / DSM 16553 / LMG 16656 / NCTC 13227 / J2315 / CF5610) (Burkholderia cepacia (strain J2315)).